We begin with the raw amino-acid sequence, 457 residues long: MITREFDTIAAISTPLGEGAIGIVRLSGTDSFAIAQKIFKGKDLNKVASHTLNYGHIIDPLTGKVMDEVMVGAMKSPKTFTREDIIEINTHGGIAVTNEILQLAIREGARLAEPGEFTKRAFLNGRVDLTQAEAVMDIIRAKTDKAMNIAVKQLDGSLSDLINNTRQEILNTLAQVEVNIDYPEYDDVEEATTAVVREKTMEFEQLLTKLLRTARRGKILREGISTAIIGRPNVGKSSLLNNLLREDKAIVTDIAGTTRDVIEEYVNINGVPLKLIDTAGIRETDDIVEQIGVERSKKALKEADLVLLVLNASEPLTAQDRQLLEISQDTNRIILLNKTDLPETIETSKLPEDVIRISVLKNQNIDKIEERINNLFFENAGLVEQDATYLSNARHISLIEKAVESLQAVNQGLELGMPVDLLQVDLTRTWEILGEITGDATPDELITQLFSQFCLGK.

3 residues coordinate (6S)-5-formyl-5,6,7,8-tetrahydrofolate: Arg25, Glu87, and Arg126. The region spanning 223 to 377 (GISTAIIGRP…IEERINNLFF (155 aa)) is the TrmE-type G domain. Residue Asn233 participates in K(+) binding. Residues 233-238 (NVGKSS), 252-258 (TDIAGTT), and 277-280 (DTAG) contribute to the GTP site. Ser237 contributes to the Mg(2+) binding site. K(+)-binding residues include Thr252, Ile254, and Thr257. Residue Thr258 participates in Mg(2+) binding. Lys457 contacts (6S)-5-formyl-5,6,7,8-tetrahydrofolate.

Belongs to the TRAFAC class TrmE-Era-EngA-EngB-Septin-like GTPase superfamily. TrmE GTPase family. Homodimer. Heterotetramer of two MnmE and two MnmG subunits. K(+) serves as cofactor.

It is found in the cytoplasm. Its function is as follows. Exhibits a very high intrinsic GTPase hydrolysis rate. Involved in the addition of a carboxymethylaminomethyl (cmnm) group at the wobble position (U34) of certain tRNAs, forming tRNA-cmnm(5)s(2)U34. This is tRNA modification GTPase MnmE from Streptococcus pneumoniae serotype 2 (strain D39 / NCTC 7466).